Reading from the N-terminus, the 187-residue chain is Adenylate kinase 1 (187 aa).

14 to 19 is an ATP binding site; that stretch reads GSGKGT. Residues 34–63 are NMP; sequence STGDMLRQAIADGTELGNQAKGYMDKGELV. AMP contacts are provided by residues Thr35, Arg40, 61-63, 89-92, and Gln96; these read ELV and GFPR. The LID stretch occupies residues 130–136; it reads ARGRADD. Arg131 contacts ATP. AMP contacts are provided by Arg133 and Arg144. Residue Gln172 participates in ATP binding.

The protein belongs to the adenylate kinase family. Monomer.

The protein localises to the cytoplasm. The enzyme catalyses AMP + ATP = 2 ADP. Its pathway is purine metabolism; AMP biosynthesis via salvage pathway; AMP from ADP: step 1/1. Functionally, catalyzes the reversible transfer of the terminal phosphate group between ATP and AMP. Plays an important role in cellular energy homeostasis and in adenine nucleotide metabolism. The polypeptide is Adenylate kinase 1 (Synechocystis sp. (strain ATCC 27184 / PCC 6803 / Kazusa)).